A 185-amino-acid chain; its full sequence is dCTP deaminase (185 aa).

Residues 107–112, 131–133, Gln152, Tyr166, and Gln176 each bind dCTP; these read KSTYAR and TLE. Catalysis depends on Glu133, which acts as the Proton donor/acceptor.

It belongs to the dCTP deaminase family. In terms of assembly, homotrimer.

The catalysed reaction is dCTP + H2O + H(+) = dUTP + NH4(+). Its pathway is pyrimidine metabolism; dUMP biosynthesis; dUMP from dCTP (dUTP route): step 1/2. Catalyzes the deamination of dCTP to dUTP. This is dCTP deaminase from Anaplasma phagocytophilum (strain HZ).